The primary structure comprises 757 residues: Ecdysone receptor (757 aa).

The tract at residues 1-300 is modulating; the sequence is MMKRRWSNNG…GPAPRLQEEL (300 aa). 2 disordered regions span residues 126–192 and 235–289; these read NSVG…GGGG and LNHH…KKIK. Positions 128 to 138 are enriched in gly residues; it reads VGGGGGGGGVP. The span at 167–183 shows a compositional bias: low complexity; that stretch reads NSNSNHSNSSSHHTNGH. 2 NR C4-type zinc fingers span residues 301–321 and 337–361; these read CLVC…CEGC and CKFG…LKKC. Positions 301-373 form a DNA-binding region, nuclear receptor; that stretch reads CLVCGDRASG…VGMRPECVVP (73 aa). The 236-residue stretch at 442–677 folds into the NR LBD domain; that stretch reads NQLAVIYKLI…FLEEIWDVHA (236 aa). Residues 717-734 show a composition bias toward low complexity; sequence TSMATSSSSSLSPSAAST. The tract at residues 717–739 is disordered; that stretch reads TSMATSSSSSLSPSAASTPNGGA.

This sequence belongs to the nuclear hormone receptor family. NR1 subfamily.

Its subcellular location is the nucleus. Receptor for ecdysone. Binds to ecdysone response elements (ECRES). In Lucilia cuprina (Green bottle fly), this protein is Ecdysone receptor (EcR).